A 144-amino-acid chain; its full sequence is Neuritin-A (144 aa).

The signal sequence occupies residues 1–27 (MGLKLSGRYIFLVLAVHLAYLLQAVKA). The GPI-anchor amidated serine moiety is linked to residue Ser114. The propeptide at 115–144 (AGAPGQRLLFPAFLPLLMVFLSTLFILVLQ) is removed in mature form.

It belongs to the neuritin family. As to expression, expressed in sensory regions of the brain including the visual, auditory and olfactory systems. Within the retina, only expressed in the retinal ganglion cells. Concentrated in axon tracts including retinal axons.

The protein resides in the cell membrane. Functionally, modulates postsynaptic dendritic arbor elaboration and synaptic maturation. This chain is Neuritin-A (nrn1-a), found in Xenopus laevis (African clawed frog).